The chain runs to 184 residues: Inosine triphosphate pyrophosphatase (184 aa).

Residue 10 to 15 (TGNANK) participates in ITP binding. Glu38 contributes to the Mg(2+) binding site. ITP-binding positions include Lys50, 66 to 67 (DT), Lys83, 142 to 145 (FGWD), Lys163, and 168 to 169 (HR).

Belongs to the HAM1 NTPase family. As to quaternary structure, homodimer. Mg(2+) serves as cofactor. Mn(2+) is required as a cofactor.

Its subcellular location is the cytoplasm. It localises to the nucleus. The enzyme catalyses ITP + H2O = IMP + diphosphate + H(+). It catalyses the reaction dITP + H2O = dIMP + diphosphate + H(+). The catalysed reaction is XTP + H2O = XMP + diphosphate + H(+). Functionally, pyrophosphatase that hydrolyzes non-canonical purine nucleotides such as inosine triphosphate (ITP), deoxyinosine triphosphate (dITP) or xanthosine 5'-triphosphate (XTP) to their respective monophosphate derivatives. The enzyme does not distinguish between the deoxy- and ribose forms. Probably excludes non-canonical purines from RNA and DNA precursor pools, thus preventing their incorporation into RNA and DNA and avoiding chromosomal lesions. This Fusarium vanettenii (strain ATCC MYA-4622 / CBS 123669 / FGSC 9596 / NRRL 45880 / 77-13-4) (Fusarium solani subsp. pisi) protein is Inosine triphosphate pyrophosphatase.